We begin with the raw amino-acid sequence, 385 residues long: GTPase Obg (385 aa).

The Obg domain maps to 1–159; the sequence is MHFIDQAEIE…RRLRLELKLI (159 aa). Positions 160–328 constitute an OBG-type G domain; the sequence is AEVGIVGMPN…LLQRVWQCLG (169 aa). GTP is bound by residues 166–173, 191–195, 213–216, 280–283, and 309–311; these read GMPNAGKS, FTTLQ, DIPG, NKID, and SAV. Serine 173 and threonine 193 together coordinate Mg(2+).

This sequence belongs to the TRAFAC class OBG-HflX-like GTPase superfamily. OBG GTPase family. Monomer. Requires Mg(2+) as cofactor.

Its subcellular location is the cytoplasm. In terms of biological role, an essential GTPase which binds GTP, GDP and possibly (p)ppGpp with moderate affinity, with high nucleotide exchange rates and a fairly low GTP hydrolysis rate. Plays a role in control of the cell cycle, stress response, ribosome biogenesis and in those bacteria that undergo differentiation, in morphogenesis control. This Synechococcus sp. (strain JA-3-3Ab) (Cyanobacteria bacterium Yellowstone A-Prime) protein is GTPase Obg.